The sequence spans 339 residues: DNA-directed RNA polymerase subunit alpha (339 aa).

The alpha N-terminal domain (alpha-NTD) stretch occupies residues 1-233 (MVREEITGST…DLFLPFIHTE (233 aa)). Residues 266–339 (GIPLNCIFID…IDLPKNKFSL (74 aa)) are alpha C-terminal domain (alpha-CTD).

This sequence belongs to the RNA polymerase alpha chain family. As to quaternary structure, in plastids the minimal PEP RNA polymerase catalytic core is composed of four subunits: alpha, beta, beta', and beta''. When a (nuclear-encoded) sigma factor is associated with the core the holoenzyme is formed, which can initiate transcription.

Its subcellular location is the plastid. It localises to the chloroplast. The enzyme catalyses RNA(n) + a ribonucleoside 5'-triphosphate = RNA(n+1) + diphosphate. Functionally, DNA-dependent RNA polymerase catalyzes the transcription of DNA into RNA using the four ribonucleoside triphosphates as substrates. The chain is DNA-directed RNA polymerase subunit alpha from Sorghum bicolor (Sorghum).